Consider the following 300-residue polypeptide: Probable alpha-L-glutamate ligase (300 aa).

The region spanning 104-287 (LQLLARQGID…IAGRMIEYIE (184 aa)) is the ATP-grasp domain. ATP contacts are provided by residues K141, 178–179 (EY), D187, and 211–213 (RSN). 3 residues coordinate Mg(2+): D248, E260, and N262. The Mn(2+) site is built by D248, E260, and N262.

The protein belongs to the RimK family. Mg(2+) is required as a cofactor. The cofactor is Mn(2+).

The chain is Probable alpha-L-glutamate ligase from Serratia proteamaculans (strain 568).